A 293-amino-acid polypeptide reads, in one-letter code: Ribosomal protein L11 methyltransferase (293 aa).

Residues Thr-145, Gly-166, Asp-188, and Asn-230 each contribute to the S-adenosyl-L-methionine site.

This sequence belongs to the methyltransferase superfamily. PrmA family.

It is found in the cytoplasm. It carries out the reaction L-lysyl-[protein] + 3 S-adenosyl-L-methionine = N(6),N(6),N(6)-trimethyl-L-lysyl-[protein] + 3 S-adenosyl-L-homocysteine + 3 H(+). Methylates ribosomal protein L11. The polypeptide is Ribosomal protein L11 methyltransferase (Shewanella putrefaciens (strain CN-32 / ATCC BAA-453)).